The primary structure comprises 156 residues: Protein US1 (156 aa).

2 disordered regions span residues 90–114 (RSRS…SDGD) and 133–156 (ARRW…DSTS). Positions 96–111 (AESGRSSSSSSVSVLS) are enriched in low complexity. Positions 147–156 (SQQAKNDSTS) are enriched in polar residues.

The polypeptide is Protein US1 (US1) (Homo sapiens (Human)).